The sequence spans 215 residues: 3-isopropylmalate dehydratase small subunit (215 aa).

It belongs to the LeuD family. LeuD type 1 subfamily. In terms of assembly, heterodimer of LeuC and LeuD.

The catalysed reaction is (2R,3S)-3-isopropylmalate = (2S)-2-isopropylmalate. It participates in amino-acid biosynthesis; L-leucine biosynthesis; L-leucine from 3-methyl-2-oxobutanoate: step 2/4. Functionally, catalyzes the isomerization between 2-isopropylmalate and 3-isopropylmalate, via the formation of 2-isopropylmaleate. This chain is 3-isopropylmalate dehydratase small subunit, found in Leptothrix cholodnii (strain ATCC 51168 / LMG 8142 / SP-6) (Leptothrix discophora (strain SP-6)).